Consider the following 161-residue polypeptide: Small ribosomal subunit protein bS6 (161 aa).

The disordered stretch occupies residues 107–161 (KGDERERGFRGPKPAGRFESGRGGAGGARRGYDDREEFRARNEREDGRDTDGEAE). A compositionally biased stretch (basic and acidic residues) spans 136 to 161 (RGYDDREEFRARNEREDGRDTDGEAE).

The protein belongs to the bacterial ribosomal protein bS6 family.

Its function is as follows. Binds together with bS18 to 16S ribosomal RNA. The protein is Small ribosomal subunit protein bS6 of Gluconacetobacter diazotrophicus (strain ATCC 49037 / DSM 5601 / CCUG 37298 / CIP 103539 / LMG 7603 / PAl5).